Reading from the N-terminus, the 502-residue chain is Ubiquitin-associated protein 1 (502 aa).

Positions 1 to 95 (MASKKLGTDV…AEAKVNSKSG (95 aa)) are interaction with ESCRT-I. In terms of domain architecture, UMA spans 17–63 (LDDVPFKIGDKFKTPAKVGLPIGFSLPDCLQVVREMQYDFSLEKKTI). The span at 80–100 (ERKAEEAEAKVNSKSGPEGDS) shows a compositional bias: basic and acidic residues. Disordered regions lie at residues 80–117 (ERKA…PPPI) and 135–156 (VSSS…DFNP). A phosphoserine mark is found at serine 146, serine 205, and serine 289. Positions 260–290 (VSNIKSLSFPKLDSDDSNQKTVKLASTFHST) are interaction with PTPN23. UBA domains are found at residues 389–430 (SPSE…LFAH) and 451–498 (QCSE…LMAR).

In terms of assembly, component of an ESCRT-I complex (endosomal sorting complex required for transport I) which consists of TSG101, VPS28, VPS37A and UBAP1 in a 1:1:1:1 stoichiometry. Interacts with PTPN23. Interacts (via UBA domains) with ubiquitinated proteins. In terms of tissue distribution, ubiquitous. Highly expressed in heart, liver, brain, kidney, spleen, skeletal muscle, stomach, testis and lung.

It is found in the cytoplasm. It localises to the cytosol. The protein localises to the endosome. In terms of biological role, component of the ESCRT-I complex, a regulator of vesicular trafficking process. Binds to ubiquitinated cargo proteins and is required for the sorting of endocytic ubiquitinated cargos into multivesicular bodies (MVBs). Plays a role in the proteasomal degradation of ubiquitinated cell-surface proteins, such as EGFR and BST2. The sequence is that of Ubiquitin-associated protein 1 from Mus musculus (Mouse).